Reading from the N-terminus, the 65-residue chain is Period circadian protein (65 aa).

The tract at residues 1-65 (EGSGGSGSSG…VTLTESLLNK (65 aa)) is disordered. Polar residues predominate over residues 18–28 (VRMSSVTNTSN). Over residues 29 to 38 (AGTGTSAGDN) the composition is skewed to low complexity. The span at 56–65 (VTLTESLLNK) shows a compositional bias: polar residues.

Forms a heterodimer with timeless (TIM); the complex then translocates into the nucleus. Phosphorylated with a circadian rhythmicity, probably by the double-time protein (dbt). Phosphorylation could be implicated in the stability of per monomer and in the formation of heterodimer per-tim.

The protein localises to the nucleus. The protein resides in the cytoplasm. It is found in the perinuclear region. Functionally, essential for biological clock functions. Determines the period length of circadian and ultradian rhythms; an increase in PER dosage leads to shortened circadian rhythms and a decrease leads to lengthened circadian rhythms. Essential for the circadian rhythmicity of locomotor activity, eclosion behavior, and for the rhythmic component of the male courtship song that originates in the thoracic nervous system. The biological cycle depends on the rhythmic formation and nuclear localization of the TIM-PER complex. Light induces the degradation of TIM, which promotes elimination of PER. Nuclear activity of the heterodimer coordinatively regulates PER and TIM transcription through a negative feedback loop. Behaves as a negative element in circadian transcriptional loop. Does not appear to bind DNA, suggesting indirect transcriptional inhibition. This is Period circadian protein (per) from Drosophila mojavensis (Fruit fly).